The chain runs to 315 residues: D-alanine--D-alanine ligase B (315 aa).

The ATP-grasp domain maps to 109-309 (KKVAAAAGVV…FAELLSWMVE (201 aa)). 135–190 (PMKPPYVVKPVREGSSFGVVIVKEDQPHPPQVIGSADWKYGDEVMVEGYIAGRELT) serves as a coordination point for ATP. Aspartate 259, glutamate 276, and asparagine 278 together coordinate Mg(2+).

This sequence belongs to the D-alanine--D-alanine ligase family. It depends on Mg(2+) as a cofactor. Mn(2+) is required as a cofactor.

It is found in the cytoplasm. It carries out the reaction 2 D-alanine + ATP = D-alanyl-D-alanine + ADP + phosphate + H(+). It functions in the pathway cell wall biogenesis; peptidoglycan biosynthesis. Functionally, cell wall formation. This Brucella melitensis biotype 1 (strain ATCC 23456 / CCUG 17765 / NCTC 10094 / 16M) protein is D-alanine--D-alanine ligase B.